We begin with the raw amino-acid sequence, 211 residues long: Probable superoxide dismutase [Mn], mitochondrial (211 aa).

4 residues coordinate Mn(2+): H36, H84, D173, and H177.

It belongs to the iron/manganese superoxide dismutase family. As to quaternary structure, homotetramer. It depends on Mn(2+) as a cofactor.

It is found in the mitochondrion matrix. It carries out the reaction 2 superoxide + 2 H(+) = H2O2 + O2. Destroys superoxide anion radicals which are normally produced within the cells and which are toxic to biological systems. This Debaryomyces hansenii (strain ATCC 36239 / CBS 767 / BCRC 21394 / JCM 1990 / NBRC 0083 / IGC 2968) (Yeast) protein is Probable superoxide dismutase [Mn], mitochondrial.